The following is a 239-amino-acid chain: Sugar fermentation stimulation protein homolog (239 aa).

This sequence belongs to the SfsA family.

The chain is Sugar fermentation stimulation protein homolog from Mannheimia succiniciproducens (strain KCTC 0769BP / MBEL55E).